Reading from the N-terminus, the 102-residue chain is Small ribosomal subunit protein uS10 (102 aa).

This sequence belongs to the universal ribosomal protein uS10 family. Part of the 30S ribosomal subunit.

In terms of biological role, involved in the binding of tRNA to the ribosomes. This chain is Small ribosomal subunit protein uS10, found in Pelagibacter ubique (strain HTCC1062).